We begin with the raw amino-acid sequence, 198 residues long: Recombination protein RecR (198 aa).

The segment at 57 to 72 (CSICGHITDQDPCYIC) adopts a C4-type zinc-finger fold. Residues 80 to 175 (SVICVVQDPK…KLSRIAHGLP (96 aa)) enclose the Toprim domain.

Belongs to the RecR family.

May play a role in DNA repair. It seems to be involved in an RecBC-independent recombinational process of DNA repair. It may act with RecF and RecO. This chain is Recombination protein RecR, found in Bacillus velezensis (strain DSM 23117 / BGSC 10A6 / LMG 26770 / FZB42) (Bacillus amyloliquefaciens subsp. plantarum).